Here is a 422-residue protein sequence, read N- to C-terminus: UDP-N-acetylglucosamine 1-carboxyvinyltransferase (422 aa).

A phosphoenolpyruvate-binding site is contributed by 22–23 (KN). Arginine 93 provides a ligand contact to UDP-N-acetyl-alpha-D-glucosamine. The active-site Proton donor is the cysteine 117. Cysteine 117 carries the 2-(S-cysteinyl)pyruvic acid O-phosphothioketal modification. Residues 122–126 (RPVDL), aspartate 308, and leucine 330 each bind UDP-N-acetyl-alpha-D-glucosamine.

Belongs to the EPSP synthase family. MurA subfamily.

Its subcellular location is the cytoplasm. The enzyme catalyses phosphoenolpyruvate + UDP-N-acetyl-alpha-D-glucosamine = UDP-N-acetyl-3-O-(1-carboxyvinyl)-alpha-D-glucosamine + phosphate. It participates in cell wall biogenesis; peptidoglycan biosynthesis. Cell wall formation. Adds enolpyruvyl to UDP-N-acetylglucosamine. The protein is UDP-N-acetylglucosamine 1-carboxyvinyltransferase of Helicobacter pylori (strain Shi470).